A 504-amino-acid polypeptide reads, in one-letter code: ATP synthase subunit alpha, chloroplastic (504 aa).

170–177 (GDRQTGKT) contacts ATP.

The protein belongs to the ATPase alpha/beta chains family. In terms of assembly, F-type ATPases have 2 components, CF(1) - the catalytic core - and CF(0) - the membrane proton channel. CF(1) has five subunits: alpha(3), beta(3), gamma(1), delta(1), epsilon(1). CF(0) has four main subunits: a, b, b' and c.

Its subcellular location is the plastid. The protein resides in the chloroplast thylakoid membrane. The catalysed reaction is ATP + H2O + 4 H(+)(in) = ADP + phosphate + 5 H(+)(out). Its function is as follows. Produces ATP from ADP in the presence of a proton gradient across the membrane. The alpha chain is a regulatory subunit. The sequence is that of ATP synthase subunit alpha, chloroplastic from Hordeum vulgare (Barley).